The chain runs to 342 residues: Palmitoyltransferase PFA4 (342 aa).

Over 1–8 the chain is Cytoplasmic; sequence MITFSNPW. A helical transmembrane segment spans residues 9 to 29; it reads IGVIIPCIIIFTLSTFSAIYI. Residues 30-38 are Lumenal-facing; it reads LPHHVSNNE. A helical transmembrane segment spans residues 39–59; it reads LTLFICASAMVWISYIIAIIV. Over 60–124 the chain is Cytoplasmic; sequence PPGSPPKNYT…GHRNMPHFMR (65 aa). The DHHC domain maps to 77-127; it reads MYCLKCKAYKPERTHHSKALGVCVLKMDHHCPWTNNTVGHRNMPHFMRFLV. The active-site S-palmitoyl cysteine intermediate is the Cys107. The helical transmembrane segment at 125-145 threads the bilayer; sequence FLVWVDMTVGYLFIRLCIRIM. Residues 146–162 lie on the Lumenal side of the membrane; it reads KLWRDKHLPSYLFDKTE. A helical transmembrane segment spans residues 163–183; the sequence is VILSIVFLPASFFVLFTVGIL. Topologically, residues 184 to 342 are cytoplasmic; the sequence is TIRVFVNMCN…ADFGVEHTDI (159 aa).

Belongs to the DHHC palmitoyltransferase family. PFA4 subfamily.

The protein localises to the endoplasmic reticulum membrane. The catalysed reaction is L-cysteinyl-[protein] + hexadecanoyl-CoA = S-hexadecanoyl-L-cysteinyl-[protein] + CoA. In terms of biological role, mediates the reversible addition of palmitate to target proteins, thereby regulating their membrane association and biological function. This chain is Palmitoyltransferase PFA4, found in Yarrowia lipolytica (strain CLIB 122 / E 150) (Yeast).